A 138-amino-acid chain; its full sequence is Ribosome-binding factor A (138 aa).

Residues 119 to 138 form a disordered region; it reads DMDEKKNSDEKRDSDEKLED.

This sequence belongs to the RbfA family. In terms of assembly, monomer. Binds 30S ribosomal subunits, but not 50S ribosomal subunits or 70S ribosomes.

The protein localises to the cytoplasm. In terms of biological role, one of several proteins that assist in the late maturation steps of the functional core of the 30S ribosomal subunit. Associates with free 30S ribosomal subunits (but not with 30S subunits that are part of 70S ribosomes or polysomes). Required for efficient processing of 16S rRNA. May interact with the 5'-terminal helix region of 16S rRNA. This Alkaliphilus metalliredigens (strain QYMF) protein is Ribosome-binding factor A.